A 743-amino-acid polypeptide reads, in one-letter code: NAD(P)H-quinone oxidoreductase subunit 5, chloroplastic (743 aa).

The next 16 membrane-spanning stretches (helical) occupy residues 9–29 (WIIP…LLLF), 40–60 (WAFQ…NLSI), 89–109 (IDPL…MVLI), 125–145 (FAYM…SNLI), 147–167 (IYIF…FWFT), 185–205 (GDFG…SFEF), 224–244 (VFVT…SAQF), 258–278 (TPIS…FLVA), 284–304 (FIVI…TVFF), 327–347 (LGYM…FHLI), 354–374 (ALLF…VGYC), 396–416 (NSFL…CFWS), 425–445 (WLYS…TAFY), 551–571 (LFPI…GIPF), 607–627 (VFSV…YKPV), and 723–743 (YLFF…FLNL).

It belongs to the complex I subunit 5 family. As to quaternary structure, NDH is composed of at least 16 different subunits, 5 of which are encoded in the nucleus.

It localises to the plastid. It is found in the chloroplast thylakoid membrane. It catalyses the reaction a plastoquinone + NADH + (n+1) H(+)(in) = a plastoquinol + NAD(+) + n H(+)(out). It carries out the reaction a plastoquinone + NADPH + (n+1) H(+)(in) = a plastoquinol + NADP(+) + n H(+)(out). In terms of biological role, NDH shuttles electrons from NAD(P)H:plastoquinone, via FMN and iron-sulfur (Fe-S) centers, to quinones in the photosynthetic chain and possibly in a chloroplast respiratory chain. The immediate electron acceptor for the enzyme in this species is believed to be plastoquinone. Couples the redox reaction to proton translocation, and thus conserves the redox energy in a proton gradient. The sequence is that of NAD(P)H-quinone oxidoreductase subunit 5, chloroplastic (ndhF) from Helianthus annuus (Common sunflower).